A 185-amino-acid chain; its full sequence is ATP-dependent protease subunit HslV (185 aa).

The active site involves Thr-12. Ala-168, Cys-171, and Thr-174 together coordinate Na(+).

Belongs to the peptidase T1B family. HslV subfamily. As to quaternary structure, a double ring-shaped homohexamer of HslV is capped on each side by a ring-shaped HslU homohexamer. The assembly of the HslU/HslV complex is dependent on binding of ATP.

Its subcellular location is the cytoplasm. It catalyses the reaction ATP-dependent cleavage of peptide bonds with broad specificity.. With respect to regulation, allosterically activated by HslU binding. Its function is as follows. Protease subunit of a proteasome-like degradation complex believed to be a general protein degrading machinery. This is ATP-dependent protease subunit HslV from Roseobacter denitrificans (strain ATCC 33942 / OCh 114) (Erythrobacter sp. (strain OCh 114)).